The sequence spans 268 residues: F-actin-capping protein subunit alpha (268 aa).

Ser-2 is subject to N-acetylserine. A Phosphoserine modification is found at Ser-17.

This sequence belongs to the F-actin-capping protein alpha subunit family. Component of the F-actin capping complex, composed of a heterodimer of an alpha and a beta subunit. Interacts with BSP1 (via C-terminus); leading to recruitment of the F-actin capping complex to actin cortical patches and the acomyosin contractile ring.

The protein resides in the cytoplasm. Its subcellular location is the cytoskeleton. It is found in the actin patch. F-actin-capping proteins bind in a Ca(2+)-independent manner to the fast growing ends of actin filaments (barbed end) thereby blocking the exchange of subunits at these ends. Unlike other capping proteins (such as gelsolin and severin), these proteins do not sever actin filaments. The chain is F-actin-capping protein subunit alpha (CAP1) from Saccharomyces cerevisiae (strain ATCC 204508 / S288c) (Baker's yeast).